The primary structure comprises 357 residues: MGDQWGDAVFAARRRGDDTTREAAFTYTNSNNTKDPFEGPNYHIAPRWVYNLATCWMFFVVVASTVTNGLVLVASAKFKKLRHPLNWILVNLAIADLLETLLASTISVCNQFFGYFILGHPMCVFEGFTVATCGIAGLWSLTVISWERWVVVCKPFGNVKFDGKMATAGIVFTWVWSAVWCAPPIFGWSRYWPHGLKTSCGPDVFSGSEDPGVQSYMIVLMITCCFIPLGIIILCYIAVWWAIRTVAQQQKDSESTQKAEKEVSRMVVVMIMAYCFCWGPYTFFACFAAANPGYAFHPLAAAMPAYFAKSATIYNPVIYVFMNRQFRVCIMQLFGKKVDDGSEVSTSKTEVSSVAPA.

The Extracellular segment spans residues Met1 to Val49. Residue Asn31 is glycosylated (N-linked (GlcNAc...) asparagine). The chain crosses the membrane as a helical span at residues Tyr50 to Ala74. Residues Ser75–Asn86 are Cytoplasmic-facing. A helical transmembrane segment spans residues Trp87 to Phe112. Residues Phe113 to Glu126 are Extracellular-facing. Cys123 and Cys200 are disulfide-bonded. The helical transmembrane segment at Gly127 to Trp146 threads the bilayer. The Cytoplasmic segment spans residues Glu147–Met165. Residues Ala166–Ser189 traverse the membrane as a helical segment. The Extracellular portion of the chain corresponds to Arg190–Ser215. The chain crosses the membrane as a helical span at residues Tyr216–Ile243. Residues Arg244 to Arg265 lie on the Cytoplasmic side of the membrane. Residues Met266–Ala289 traverse the membrane as a helical segment. The Extracellular segment spans residues Ala290–His297. Residues Pro298–Met322 traverse the membrane as a helical segment. Lys309 bears the N6-(retinylidene)lysine mark. The Cytoplasmic portion of the chain corresponds to Asn323–Ala357.

The protein belongs to the G-protein coupled receptor 1 family. Opsin subfamily. Phosphorylated on some or all of the serine and threonine residues present in the C-terminal region. The color pigments are found in the cone photoreceptor cells.

The protein resides in the membrane. Its function is as follows. Visual pigments are the light-absorbing molecules that mediate vision. They consist of an apoprotein, opsin, covalently linked to cis-retinal. The polypeptide is Red-sensitive opsin (R007) (Psalidodon fasciatus (Banded astyanax)).